The chain runs to 196 residues: UPF0200 protein MK0400 (196 aa).

Residue 7–14 (GMPGAGKG) coordinates ATP.

It belongs to the UPF0200 family.

In Methanopyrus kandleri (strain AV19 / DSM 6324 / JCM 9639 / NBRC 100938), this protein is UPF0200 protein MK0400.